We begin with the raw amino-acid sequence, 486 residues long: Regulatory protein ViaA (486 aa).

This sequence belongs to the ViaA family. In terms of assembly, homodimer. Interacts with RavA.

It localises to the cytoplasm. Functionally, component of the RavA-ViaA chaperone complex, which may act on the membrane to optimize the function of some of the respiratory chains. ViaA stimulates the ATPase activity of RavA. This chain is Regulatory protein ViaA, found in Erwinia tasmaniensis (strain DSM 17950 / CFBP 7177 / CIP 109463 / NCPPB 4357 / Et1/99).